We begin with the raw amino-acid sequence, 163 residues long: 3-hydroxyacyl-[acyl-carrier-protein] dehydratase FabZ (163 aa).

Residue His61 is part of the active site.

Belongs to the thioester dehydratase family. FabZ subfamily.

The protein resides in the cytoplasm. It carries out the reaction a (3R)-hydroxyacyl-[ACP] = a (2E)-enoyl-[ACP] + H2O. Involved in unsaturated fatty acids biosynthesis. Catalyzes the dehydration of short chain beta-hydroxyacyl-ACPs and long chain saturated and unsaturated beta-hydroxyacyl-ACPs. This is 3-hydroxyacyl-[acyl-carrier-protein] dehydratase FabZ from Dinoroseobacter shibae (strain DSM 16493 / NCIMB 14021 / DFL 12).